A 404-amino-acid polypeptide reads, in one-letter code: Glycerol-1-phosphate dehydrogenase [NAD(P)+] (404 aa).

Residues aspartate 55, glycine 117–aspartate 121, and threonine 139–serine 142 contribute to the NAD(+) site. Residue aspartate 144 participates in substrate binding. Serine 148 provides a ligand contact to NAD(+). Aspartate 191 serves as a coordination point for substrate. Residues aspartate 191 and histidine 271 each contribute to the Ni(2+) site. Histidine 275 lines the substrate pocket. Position 291 (histidine 291) interacts with Ni(2+).

This sequence belongs to the glycerol-1-phosphate dehydrogenase family. As to quaternary structure, homodimer. Ni(2+) serves as cofactor.

The protein localises to the cytoplasm. It catalyses the reaction sn-glycerol 1-phosphate + NAD(+) = dihydroxyacetone phosphate + NADH + H(+). It carries out the reaction sn-glycerol 1-phosphate + NADP(+) = dihydroxyacetone phosphate + NADPH + H(+). In terms of biological role, catalyzes the NAD(P)H-dependent reduction of dihydroxyacetonephosphate (DHAP or glycerone phosphate) to glycerol 1-phosphate (G1P). The G1P thus generated is probably used for the synthesis of phosphoglycerolipids in Gram-positive bacterial species. This is Glycerol-1-phosphate dehydrogenase [NAD(P)+] from Geobacillus thermodenitrificans (strain NG80-2).